A 291-amino-acid polypeptide reads, in one-letter code: Lys-63-specific deubiquitinase BRCC36-like (291 aa).

The 168-residue stretch at 12–179 (VYLESDAFLV…YTCFQSVQAS (168 aa)) folds into the MPN domain. 3 residues coordinate Zn(2+): H122, H124, and D135. A JAMM motif motif is present at residues 122 to 135 (HSHPHITVWPSHVD). Residues 259 to 286 (LQWLEDRLEQNQQRLQELEQEKEDLMEE) adopt a coiled-coil conformation.

Belongs to the peptidase M67A family. BRCC36 subfamily.

Metalloprotease that specifically cleaves 'Lys-63'-linked polyubiquitin chains. The protein is Lys-63-specific deubiquitinase BRCC36-like of Mus musculus (Mouse).